A 345-amino-acid chain; its full sequence is Nicotinate-nucleotide--dimethylbenzimidazole phosphoribosyltransferase (345 aa).

E311 serves as the catalytic Proton acceptor.

The protein belongs to the CobT family.

It carries out the reaction 5,6-dimethylbenzimidazole + nicotinate beta-D-ribonucleotide = alpha-ribazole 5'-phosphate + nicotinate + H(+). It participates in nucleoside biosynthesis; alpha-ribazole biosynthesis; alpha-ribazole from 5,6-dimethylbenzimidazole: step 1/2. Catalyzes the synthesis of alpha-ribazole-5'-phosphate from nicotinate mononucleotide (NAMN) and 5,6-dimethylbenzimidazole (DMB). The chain is Nicotinate-nucleotide--dimethylbenzimidazole phosphoribosyltransferase from Janthinobacterium sp. (strain Marseille) (Minibacterium massiliensis).